A 149-amino-acid chain; its full sequence is Histone H2B.3, sperm (149 aa).

The tract at residues 1–57 (MPRSPAKTSPRKGSPRKGSPRKGSPSRKASPKRGGKGAKRAGKGGRRRRVVKRRRRR) is disordered. 6 consecutive short sequence motifs (SPKK motif) follow at residues 4–7 (SPAK), 9–12 (SPRK), 14–17 (SPRK), 19–22 (SPRK), 24–27 (SPSR), and 30–33 (SPKR). The span at 9–20 (SPRKGSPRKGSP) shows a compositional bias: basic residues. S19, S24, and S30 each carry phosphoserine. A compositionally biased stretch (basic residues) spans 29 to 57 (ASPKRGGKGAKRAGKGGRRRRVVKRRRRR). A glycan (O-linked (GlcNAc) serine) is linked at S136. Residue K144 forms a Glycyl lysine isopeptide (Lys-Gly) (interchain with G-Cter in ubiquitin) linkage.

This sequence belongs to the histone H2B family. In terms of assembly, the nucleosome is a histone octamer containing two molecules each of H2A, H2B, H3 and H4 assembled in one H3-H4 heterotetramer and two H2A-H2B heterodimers. The octamer wraps approximately 147 bp of DNA. Post-translationally, monoubiquitination of Lys-144 gives a specific tag for epigenetic transcriptional activation and is also prerequisite for histone H3 'Lys-4' and 'Lys-79' methylation. Phosphorylated on SPKK motifs 4, 5 and 6; which may regulate DNA binding. Dephosphorylated during maturation of spermatids to mature sperm and rephosphorylated at fertilization. In terms of processing, glcNAcylation at Ser-136 promotes monoubiquitination of Lys-144. It fluctuates in response to extracellular glucose, and associates with transcribed genes.

The protein localises to the nucleus. Its subcellular location is the chromosome. Core component of nucleosome. Nucleosomes wrap and compact DNA into chromatin, limiting DNA accessibility to the cellular machineries which require DNA as a template. Histones thereby play a central role in transcription regulation, DNA repair, DNA replication and chromosomal stability. DNA accessibility is regulated via a complex set of post-translational modifications of histones, also called histone code, and nucleosome remodeling. This chain is Histone H2B.3, sperm, found in Parechinus angulosus (Angulate sea urchin).